An 890-amino-acid chain; its full sequence is Exo-beta-D-glucosaminidase (890 aa).

An N-terminal signal peptide occupies residues 1-18; that stretch reads MIAKAVAALLLGSGLASA. The propeptide occupies 19 to 26; the sequence is AGTPLTSK. N-linked (GlcNAc...) asparagine glycans are attached at residues Asn194, Asn334, and Asn438. Asp462 functions as the Proton donor in the catalytic mechanism. The Nucleophile role is filled by Glu537. N-linked (GlcNAc...) asparagine glycosylation is found at Asn576 and Asn687.

It belongs to the glycosyl hydrolase 2 family. As to quaternary structure, monomer.

The protein resides in the secreted. The protein localises to the extracellular space. It catalyses the reaction Hydrolysis of chitosan or chitosan oligosaccharides to remove successive D-glucosamine residues from the non-reducing termini.. Hydrolyzes chitosan and chitooligosaccharides with retention of anomeric configuration. Has no activity against beta-D-galactoside, beta-D-glucuronide, beta-D-mannoside, chitin, glycol chitosan, cellulose, N,N'-diacetylchitibiose and pNP-GlcNAc. The protein is Exo-beta-D-glucosaminidase of Hypocrea virens (Gliocladium virens).